The chain runs to 2524 residues: Highly reducing polyketide synthase Preu5 (2524 aa).

The Ketosynthase family 3 (KS3) domain occupies 5–426; the sequence is DTPIAIIGLS…GSNSAIVIEK (422 aa). Residues cysteine 175, histidine 310, and histidine 350 each act as for beta-ketoacyl synthase activity in the active site. The interval 431–470 is disordered; that stretch reads DELGHETNGTNGVSVSNGVNGSNGFTNGSNGTNGHAENGN. The span at 437–464 shows a compositional bias: low complexity; it reads TNGTNGVSVSNGVNGSNGFTNGSNGTNG. The interval 559-882 is malonyl-CoA:ACP transacylase (MAT) domain; it reads VFTGQGAQYA…TYLPSLVRNV (324 aa). Serine 648 (for malonyltransferase activity) is an active-site residue. Positions 950 to 1084 are N-terminal hotdog fold; the sequence is HELLGRRVVS…GQIEPEFADM (135 aa). In terms of domain architecture, PKS/mFAS DH spans 950–1264; it reads HELLGRRVVS…FRNIGSADEN (315 aa). Residues 950-1266 are dehydratase (DH) domain; the sequence is HELLGRRVVS…NIGSADENID (317 aa). Histidine 982 (proton acceptor; for dehydratase activity) is an active-site residue. The tract at residues 1102–1264 is C-terminal hotdog fold; it reads ADLLEHDIEG…FRNIGSADEN (163 aa). Catalysis depends on aspartate 1171, which acts as the Proton donor; for dehydratase activity. Positions 1418-1611 are methyltransferase (CMet) domain; that stretch reads SQAVGDLADN…IPGVWDSEVQ (194 aa). An enoylreductase (ER) domain region spans residues 1825 to 2139; it reads GSPDSIYFRR…SGDHLGKIVV (315 aa). The ketoreductase (KR) domain stretch occupies residues 2164-2339; the sequence is GTYLVTGGTR…HTVSIALPIV (176 aa). A Carrier domain is found at 2445 to 2522; the sequence is DPLEGLTEAL…ALATDILSQR (78 aa). Serine 2482 carries the O-(pantetheine 4'-phosphoryl)serine modification.

Requires pantetheine 4'-phosphate as cofactor.

Its function is as follows. Highly reducing polyketide synthase; part of a gene cluster that mediates the biosynthesis of a yet unidentified natural product. The protein is Highly reducing polyketide synthase Preu5 of Preussia isomera (Coprophilous fungus).